A 187-amino-acid chain; its full sequence is Elongation factor P (187 aa).

This sequence belongs to the elongation factor P family.

It is found in the cytoplasm. It functions in the pathway protein biosynthesis; polypeptide chain elongation. Functionally, involved in peptide bond synthesis. Stimulates efficient translation and peptide-bond synthesis on native or reconstituted 70S ribosomes in vitro. Probably functions indirectly by altering the affinity of the ribosome for aminoacyl-tRNA, thus increasing their reactivity as acceptors for peptidyl transferase. The protein is Elongation factor P of Mycobacterium sp. (strain JLS).